Reading from the N-terminus, the 339-residue chain is Endospore coat-associated protein YutH (339 aa).

It belongs to the CotS family.

It localises to the forespore outer membrane. The protein resides in the spore coat. In terms of biological role, involved in sporulation. The protein is Endospore coat-associated protein YutH (yutH) of Bacillus subtilis (strain 168).